The primary structure comprises 413 residues: Arginine biosynthesis bifunctional protein ArgJ (413 aa).

Substrate contacts are provided by Thr158, Lys184, Thr195, Glu285, Asn408, and Ser413. The active-site Nucleophile is the Thr195.

This sequence belongs to the ArgJ family. Heterotetramer of two alpha and two beta chains.

It is found in the cytoplasm. The enzyme catalyses N(2)-acetyl-L-ornithine + L-glutamate = N-acetyl-L-glutamate + L-ornithine. The catalysed reaction is L-glutamate + acetyl-CoA = N-acetyl-L-glutamate + CoA + H(+). It functions in the pathway amino-acid biosynthesis; L-arginine biosynthesis; L-ornithine and N-acetyl-L-glutamate from L-glutamate and N(2)-acetyl-L-ornithine (cyclic): step 1/1. It participates in amino-acid biosynthesis; L-arginine biosynthesis; N(2)-acetyl-L-ornithine from L-glutamate: step 1/4. Functionally, catalyzes two activities which are involved in the cyclic version of arginine biosynthesis: the synthesis of N-acetylglutamate from glutamate and acetyl-CoA as the acetyl donor, and of ornithine by transacetylation between N(2)-acetylornithine and glutamate. The chain is Arginine biosynthesis bifunctional protein ArgJ from Brucella suis biovar 1 (strain 1330).